The sequence spans 85 residues: Large ribosomal subunit protein bL27 (85 aa).

Residues 1 to 20 (MATKKAGGSTRNGRDSEAKR) form a disordered region.

The protein belongs to the bacterial ribosomal protein bL27 family.

The polypeptide is Large ribosomal subunit protein bL27 (Glaesserella parasuis serovar 5 (strain SH0165) (Haemophilus parasuis)).